The following is a 139-amino-acid chain: D-ribose pyranase (139 aa).

H20 serves as the catalytic Proton donor. Substrate is bound by residues D28, H106, and 128–130; that span reads YAN.

Belongs to the RbsD / FucU family. RbsD subfamily. Homodecamer.

It is found in the cytoplasm. It carries out the reaction beta-D-ribopyranose = beta-D-ribofuranose. The protein operates within carbohydrate metabolism; D-ribose degradation; D-ribose 5-phosphate from beta-D-ribopyranose: step 1/2. Its function is as follows. Catalyzes the interconversion of beta-pyran and beta-furan forms of D-ribose. The polypeptide is D-ribose pyranase (Pectobacterium carotovorum subsp. carotovorum (strain PC1)).